The following is a 239-amino-acid chain: ATP synthase subunit b (239 aa).

The segment covering M1 to P22 has biased composition (low complexity). Positions M1–E64 are disordered. Basic and acidic residues-rich tracts occupy residues K23–Q33 and E45–E64. The helical transmembrane segment at S85–M105 threads the bilayer.

This sequence belongs to the ATPase B chain family. As to quaternary structure, F-type ATPases have 2 components, F(1) - the catalytic core - and F(0) - the membrane proton channel. F(1) has five subunits: alpha(3), beta(3), gamma(1), delta(1), epsilon(1). F(0) has three main subunits: a(1), b(2) and c(10-14). The alpha and beta chains form an alternating ring which encloses part of the gamma chain. F(1) is attached to F(0) by a central stalk formed by the gamma and epsilon chains, while a peripheral stalk is formed by the delta and b chains.

It localises to the cell inner membrane. In terms of biological role, f(1)F(0) ATP synthase produces ATP from ADP in the presence of a proton or sodium gradient. F-type ATPases consist of two structural domains, F(1) containing the extramembraneous catalytic core and F(0) containing the membrane proton channel, linked together by a central stalk and a peripheral stalk. During catalysis, ATP synthesis in the catalytic domain of F(1) is coupled via a rotary mechanism of the central stalk subunits to proton translocation. Component of the F(0) channel, it forms part of the peripheral stalk, linking F(1) to F(0). The chain is ATP synthase subunit b from Koribacter versatilis (strain Ellin345).